Consider the following 927-residue polypeptide: DNA mismatch repair protein MutS (927 aa).

The disordered stretch occupies residues Asp44 to Asp80. Acidic residues predominate over residues Glu67–Asn79. Gly725–Ser732 contacts ATP.

This sequence belongs to the DNA mismatch repair MutS family.

This protein is involved in the repair of mismatches in DNA. It is possible that it carries out the mismatch recognition step. This protein has a weak ATPase activity. The chain is DNA mismatch repair protein MutS from Prochlorococcus marinus (strain MIT 9303).